A 512-amino-acid polypeptide reads, in one-letter code: Ammonium transporter 2 (512 aa).

Over 1–47 (MSSVNSIPTATSTVYISVLPATATPSGGSGGNVLHEDLNKFYDYGNT) the chain is Extracellular. The helical transmembrane segment at 48–68 (SWILACTPLCLIMVPGVAFFY) threads the bilayer. Residues 69–77 (SGLARRKNT) lie on the Cytoplasmic side of the membrane. The helical transmembrane segment at 78–98 (LALIMLSMLGLCVSFFQWYFW) threads the bilayer. Over 99–137 (GYSLAFSQTGTSGYIGNLRHFAFIRTLADYSPGSNNIPE) the chain is Extracellular. A helical transmembrane segment spans residues 138–158 (LVFANFQGMFAAITVALFTGA). At 159–167 (AAERGRIGP) the chain is on the cytoplasmic side. The chain crosses the membrane as a helical span at residues 168 to 188 (MLIITFVWLTVVYCPIACWIW). Topologically, residues 189–201 (NPNGWAFKFGVYD) are extracellular. The helical transmembrane segment at 202-222 (FAGGGPVEVGSGFAALAYTVC) threads the bilayer. The Cytoplasmic segment spans residues 223-238 (LGRRSKFVEEQFRPHS). A helical transmembrane segment spans residues 239–259 (VLNVVLGTSLLWFGWLGFNGG). Residues 260 to 267 (SAYGSNLR) are Extracellular-facing. A helical membrane pass occupies residues 268–288 (AAMAITNTNLAGAVAGLVWVI). The Cytoplasmic segment spans residues 289–300 (YDYIFRTRKWST). Residues 301–321 (IGFCSGVVAGLVAATPCAGFV) traverse the membrane as a helical segment. Ser-322 is a topological domain (extracellular). The helical transmembrane segment at 323-343 (PHASLAIGAITGLCCNWAIKL) threads the bilayer. Residues 344 to 354 (KSHMRIDDAMD) lie on the Cytoplasmic side of the membrane. The helical transmembrane segment at 355–375 (IFAIHGVAGFVGTFLNGLFAV) threads the bilayer. At 376 to 406 (DYIAAMDGIYVGENKIRGGWFDHHWRQLGLQ) the chain is on the extracellular side. The helical transmembrane segment at 407-427 (MAYICAVGAYDFVVTFIILFI) threads the bilayer. Topologically, residues 428-512 (TDKIPYLQLR…TNPLELGLTI (85 aa)) are cytoplasmic.

It belongs to the ammonia transporter channel (TC 1.A.11.2) family.

The protein localises to the membrane. In terms of biological role, transporter for ammonium to use as a nitrogen source. This chain is Ammonium transporter 2 (amt2), found in Schizosaccharomyces pombe (strain 972 / ATCC 24843) (Fission yeast).